We begin with the raw amino-acid sequence, 325 residues long: Tryptophan--tRNA ligase (325 aa).

Residues 9–11 (QPS) and 17–18 (GN) each bind ATP. Residues 10-18 (PSGILHIGN) carry the 'HIGH' region motif. L-tryptophan is bound at residue Asp-132. Residues 144-146 (GKD), Val-184, and 191-195 (KMSKS) each bind ATP. The short motif at 191 to 195 (KMSKS) is the 'KMSKS' region element.

It belongs to the class-I aminoacyl-tRNA synthetase family. Homodimer.

It is found in the cytoplasm. It carries out the reaction tRNA(Trp) + L-tryptophan + ATP = L-tryptophyl-tRNA(Trp) + AMP + diphosphate + H(+). In terms of biological role, catalyzes the attachment of tryptophan to tRNA(Trp). This Fusobacterium nucleatum subsp. nucleatum (strain ATCC 25586 / DSM 15643 / BCRC 10681 / CIP 101130 / JCM 8532 / KCTC 2640 / LMG 13131 / VPI 4355) protein is Tryptophan--tRNA ligase.